The primary structure comprises 128 residues: Virion-associated protein (128 aa).

Coiled coils occupy residues 1–30 and 37–58; these read MNLA…ILAK and ESSN…EMKE. The interval 98–128 is disordered; that stretch reads FDVGNEGMGSSTNPNALKWPPTEKPQPWPPR. A compositionally biased stretch (pro residues) spans 119-128; the sequence is TEKPQPWPPR. The capsid binding stretch occupies residues 122–128; the sequence is PQPWPPR.

The protein belongs to the caulimovirus ORF III family. Homotetramer, through coiled-coil domain. Homotrimer when interacts with icosehadral capsid. Interacts with capsid protein, and with Movement protein.

It localises to the virion. It is found in the host cell junction. Its subcellular location is the host plasmodesma. Functionally, plays a role in virus cell-to-cell and plant-to-plant transmission. Interacts with virion icosahedral capsid and movement protein, thereby facilitating virion cell-to-cell transmission through plasmodesmata opened by viral movement protein. Also interacts with aphid transmission factor, attaching the virion to aphid stylet when the animal feeds on an virus infected plant. Aphid saliva may later detach the virion, inducing release of infectious particles when the animal feeds on a new plant. In Carnation etched ring virus (CERV), this protein is Virion-associated protein.